The following is a 366-amino-acid chain: Chorismate synthase (366 aa).

NADP(+)-binding residues include R48 and R54. FMN-binding positions include 125–127, 238–239, G278, 293–297, and R319; these read RSS, NA, and KPTSS.

It belongs to the chorismate synthase family. In terms of assembly, homotetramer. FMNH2 serves as cofactor.

The enzyme catalyses 5-O-(1-carboxyvinyl)-3-phosphoshikimate = chorismate + phosphate. Its pathway is metabolic intermediate biosynthesis; chorismate biosynthesis; chorismate from D-erythrose 4-phosphate and phosphoenolpyruvate: step 7/7. In terms of biological role, catalyzes the anti-1,4-elimination of the C-3 phosphate and the C-6 proR hydrogen from 5-enolpyruvylshikimate-3-phosphate (EPSP) to yield chorismate, which is the branch point compound that serves as the starting substrate for the three terminal pathways of aromatic amino acid biosynthesis. This reaction introduces a second double bond into the aromatic ring system. The chain is Chorismate synthase from Thiobacillus denitrificans (strain ATCC 25259 / T1).